Reading from the N-terminus, the 341-residue chain is L-threonine 3-dehydrogenase (341 aa).

Zn(2+) is bound at residue cysteine 38. Residues threonine 40 and histidine 43 each act as charge relay system in the active site. Residues histidine 63, glutamate 64, cysteine 93, cysteine 96, cysteine 99, and cysteine 107 each coordinate Zn(2+). NAD(+)-binding positions include isoleucine 175, aspartate 195, arginine 200, 262–264, and 286–287; these read LGI and IY.

It belongs to the zinc-containing alcohol dehydrogenase family. In terms of assembly, homotetramer. Zn(2+) is required as a cofactor.

It is found in the cytoplasm. It carries out the reaction L-threonine + NAD(+) = (2S)-2-amino-3-oxobutanoate + NADH + H(+). It functions in the pathway amino-acid degradation; L-threonine degradation via oxydo-reductase pathway; glycine from L-threonine: step 1/2. In terms of biological role, catalyzes the NAD(+)-dependent oxidation of L-threonine to 2-amino-3-ketobutyrate. This is L-threonine 3-dehydrogenase from Shewanella baltica (strain OS185).